The sequence spans 97 residues: Na(+)/H(+) antiporter subunit F1 (97 aa).

3 helical membrane-spanning segments follow: residues 3–23, 35–55, and 60–80; these read HNVIIVIALIIVVISMLAMLI, VVALDAIGLQLMAVIALFSIL, and YMIVVIMMIGILAFLGTAVFS.

The protein belongs to the CPA3 antiporters (TC 2.A.63) subunit F family. As to quaternary structure, may form a heterooligomeric complex that consists of seven subunits: mnhA1, mnhB1, mnhC1, mnhD1, mnhE1, mnhF1 and mnhG1.

It localises to the cell membrane. Its function is as follows. Mnh complex is a Na(+)/H(+) antiporter involved in Na(+) excretion. This Staphylococcus aureus (strain Mu3 / ATCC 700698) protein is Na(+)/H(+) antiporter subunit F1 (mnhF1).